Here is a 184-residue protein sequence, read N- to C-terminus: Troponin I, slow skeletal muscle (184 aa).

P1 is modified (N-acetylproline; partial). Positions 1 to 45 (PEVERKSKITASRKLLKSLMLAKAKECQQEHEAREAEKVRYLAER) are involved in binding TNC. S55 is subject to Phosphoserine. Positions 94–115 (LKLKVLDLRGKFKRPPLRRVRV) are involved in binding TNC and actin.

The protein belongs to the troponin I family. In terms of assembly, binds to actin and tropomyosin. In terms of processing, in the muscle sample, approximately 25% of the chains were blocked. Pro-1 is probably acetylated. Post-translationally, the N-terminus is blocked.

Its function is as follows. Troponin I is the inhibitory subunit of troponin, the thin filament regulatory complex which confers calcium-sensitivity to striated muscle actomyosin ATPase activity. This chain is Troponin I, slow skeletal muscle (TNNI1), found in Oryctolagus cuniculus (Rabbit).